Consider the following 452-residue polypeptide: MREHYGVVTPMHNSRPRRVAVLSVHTSPLAQPGTGDAGGMNVYVLQSAIQMARRGVEVEIFTRATSSADAPVQEAAPGVLVRNVVAGPFEGLDKQDLPTQLCAFVAGVLREEARHEPGYYNLVHSHYWLSGQVGWLARDRWGVPLVHTAHTLAAVKNLSLADGDTPEPAARQIGEQQVVAESDRLVANTTEESDQLVRHYGADPNRIDVVAPGADLTRYRPGDRAAARAKLGLDPRETVVTFVGRIQPLKAPDVLLRAAAELIARDPESTLRVLVVGGPSGSGLARPDALIELASSLGIAARVTFLPPQAPDRLVDVYRASDLVAVPSYSESFGLVAIEAQACGTPVIAANVGGLGVAVRNGETGLLVDGHRTEDWATALQSLVSEPGRLAALAAEAPRHAENFSWEHTADGLLESYRMATVNYNYGHGPSEFAPRRAGGLWKLRRAGGVRA.

1D-myo-inositol 3-phosphate is bound at residue His-25. UDP-N-acetyl-alpha-D-glucosamine-binding positions include 31 to 32 and Gly-39; that span reads QP. Residues 36-41, Lys-94, Tyr-127, Thr-151, and Arg-171 contribute to the 1D-myo-inositol 3-phosphate site; that span reads DAGGMN. Residues Arg-245, Lys-250, and Gln-309 each coordinate UDP-N-acetyl-alpha-D-glucosamine. Tyr-318, Arg-319, and Ser-321 together coordinate Mg(2+). UDP-N-acetyl-alpha-D-glucosamine contacts are provided by Glu-331 and Glu-339. Mg(2+) is bound at residue Thr-345.

It belongs to the glycosyltransferase group 1 family. MshA subfamily. Homodimer.

The catalysed reaction is 1D-myo-inositol 3-phosphate + UDP-N-acetyl-alpha-D-glucosamine = 1D-myo-inositol 2-acetamido-2-deoxy-alpha-D-glucopyranoside 3-phosphate + UDP + H(+). Its function is as follows. Catalyzes the transfer of a N-acetyl-glucosamine moiety to 1D-myo-inositol 3-phosphate to produce 1D-myo-inositol 2-acetamido-2-deoxy-glucopyranoside 3-phosphate in the mycothiol biosynthesis pathway. This is D-inositol 3-phosphate glycosyltransferase from Rhodococcus jostii (strain RHA1).